We begin with the raw amino-acid sequence, 291 residues long: ATP synthase gamma chain (291 aa).

Belongs to the ATPase gamma chain family. In terms of assembly, F-type ATPases have 2 components, CF(1) - the catalytic core - and CF(0) - the membrane proton channel. CF(1) has five subunits: alpha(3), beta(3), gamma(1), delta(1), epsilon(1). CF(0) has three main subunits: a, b and c.

It is found in the cell inner membrane. Functionally, produces ATP from ADP in the presence of a proton gradient across the membrane. The gamma chain is believed to be important in regulating ATPase activity and the flow of protons through the CF(0) complex. This is ATP synthase gamma chain from Burkholderia mallei (strain NCTC 10247).